The sequence spans 544 residues: Cytochrome P450 monooxygenase tenB (544 aa).

Residues 13 to 33 (LGYYEKVTGILGVVSIILLFW) form a helical membrane-spanning segment. A compositionally biased stretch (basic and acidic residues) spans 438–448 (FDPFRFSRASK). A disordered region spans residues 438–467 (FDPFRFSRASKDDDDDDDDDGRSTSSHTKD). Cys-486 serves as a coordination point for heme.

Belongs to the cytochrome P450 family. Heme is required as a cofactor.

It localises to the membrane. It participates in secondary metabolite biosynthesis. Functionally, cytochrome P450 monooxygenase; part of the gene cluster that mediates the biosynthesis of tenellin-type 2-pyridones, iron-chelating compounds involved in iron stress tolerance, competition with the natural competitor fungus Metarhizium robertsii and insect hosts infection. TenB catalyzes the selective N-hydroxylation of the 2-pyridone nitrogen of yield tellinin and 15-hydroxytellenin (15-HT), respectively. The pathway begins with the assembly of the polyketide-amino acid backbone by the hybrid PKS-NRPS tenS with the help of the enoyl reductase tenC. These enzymes catalyze the synthesis of the pyrrolidine-2-dione intermediates pretellinin A, 11-hydropretellenin A, 12-hydropretellenin A, 13-hydropretellenin A, 14-hydropretellenin A, 12-oxopretellenin A and prototellinin D. The cytochrome P450 monooxygenase tenA then catalyzes an oxidative ring expansion of pretenellin A and 14-hydropretellenin A to form the 2-pyridone core, leading to pretenellin B and pyridovericin, respectively. The cytochrome P450 monooxygenase tenB is then required for the selective N-hydroxylation of the 2-pyridone nitrogen of yield tellinin and 15-hydroxytellenin (15-HT), respectively. The UDP-glucosyltransferase GT1 and the methyltransferase MT1, located outside the tenS gene cluster, contribute to the stepwise glycosylation and methylation of 15-HT to obtain the glycoside pyridovericin-N-O-(4-O-methyl-beta-D-glucopyranoside) (PMGP). Additional related compounds such as 1-O-methyl-15-HT, (8Z)-1-O-methyl-15-HT, and O-methyltenellin A are also produced but the enzymes involved in their biosynthesis have still to be determined. The chain is Cytochrome P450 monooxygenase tenB from Beauveria bassiana (strain ARSEF 2860) (White muscardine disease fungus).